We begin with the raw amino-acid sequence, 296 residues long: Ribonuclease HIII (296 aa).

The region spanning 80–296 (LALIGSDEVG…NTKKAYQRLK (217 aa)) is the RNase H type-2 domain. A divalent metal cation is bound by residues Asp86, Glu87, and Asp191.

This sequence belongs to the RNase HII family. RnhC subfamily. Mn(2+) is required as a cofactor. Mg(2+) serves as cofactor.

The protein resides in the cytoplasm. It carries out the reaction Endonucleolytic cleavage to 5'-phosphomonoester.. Its function is as follows. Endonuclease that specifically degrades the RNA of RNA-DNA hybrids. The protein is Ribonuclease HIII of Streptococcus thermophilus (strain ATCC BAA-250 / LMG 18311).